A 284-amino-acid polypeptide reads, in one-letter code: Homeobox protein SIX1 (284 aa).

A DNA-binding region (homeobox) is located at residues 124–183; that stretch reads GEETSYCFKEKSRGVLREWYAHNPYPSPREKRELAEATGLTTTQVSNWFKNRRQRDRAAE. The segment at 168 to 271 is disordered; the sequence is VSNWFKNRRQ…AHQHQLQDSL (104 aa). The segment covering 179–190 has biased composition (basic and acidic residues); the sequence is DRAAEAKERENT. The segment covering 242–271 has biased composition (polar residues); that stretch reads RSSNYSLPGLTASQPSHGLQAHQHQLQDSL.

The protein belongs to the SIX/Sine oculis homeobox family. In terms of assembly, interacts with DACH1. Interacts with EYA1. Interacts with EYA2. Interacts with CDH1. Interacts with TBX18. Interacts with CEBPA. Interacts with CEBPB. Interacts with EBF2. In terms of processing, phosphorylated during interphase; becomes hyperphosphorylated during mitosis. Hyperphosphorylation impairs binding to promoter elements. Ubiquitinated by the anaphase promoting complex (APC), leading to its proteasomal degradation.

It is found in the nucleus. The protein resides in the cytoplasm. Transcription factor that is involved in the regulation of cell proliferation, apoptosis and embryonic development. Plays an important role in the development of several organs, including kidney, muscle and inner ear. Depending on context, functions as a transcriptional repressor or activator. Lacks an activation domain, and requires interaction with EYA family members for transcription activation. Mediates nuclear translocation of EYA1 and EYA2. Binds the 5'-TCA[AG][AG]TTNC-3' motif present in the MEF3 element in the MYOG promoter and CIDEA enhancer. Regulates the expression of numerous genes, including MYC, CCNA1, CCND1 and EZR. Acts as an activator of the IGFBP5 promoter, probably coactivated by EYA2. Repression of precursor cell proliferation in myoblasts is switched to activation through recruitment of EYA3 to the SIX1-DACH1 complex. During myogenesis, seems to act together with EYA2 and DACH2. Regulates the expression of CCNA1. Promotes brown adipocyte differentiation. This chain is Homeobox protein SIX1 (SIX1), found in Lagothrix lagotricha (Brown woolly monkey).